Here is a 168-residue protein sequence, read N- to C-terminus: Lipoprotein signal peptidase (168 aa).

Transmembrane regions (helical) follow at residues 15-35 (AIAAVTVVLDQISKLWILGLL), 69-89 (WGRWLLIGFSILVVIGLAVWV), and 95-115 (PLLAVGIGLIIGGAIGNNLID). Residues D124 and D141 contribute to the active site. Residues 133-153 (FPWVFNIADSGISVGVALLLL) traverse the membrane as a helical segment.

The protein belongs to the peptidase A8 family.

The protein resides in the cell inner membrane. It carries out the reaction Release of signal peptides from bacterial membrane prolipoproteins. Hydrolyzes -Xaa-Yaa-Zaa-|-(S,diacylglyceryl)Cys-, in which Xaa is hydrophobic (preferably Leu), and Yaa (Ala or Ser) and Zaa (Gly or Ala) have small, neutral side chains.. It functions in the pathway protein modification; lipoprotein biosynthesis (signal peptide cleavage). This protein specifically catalyzes the removal of signal peptides from prolipoproteins. The polypeptide is Lipoprotein signal peptidase (Caulobacter vibrioides (strain ATCC 19089 / CIP 103742 / CB 15) (Caulobacter crescentus)).